Reading from the N-terminus, the 64-residue chain is Small ribosomal subunit protein eS17 (64 aa).

It belongs to the eukaryotic ribosomal protein eS17 family.

The polypeptide is Small ribosomal subunit protein eS17 (Methanosarcina acetivorans (strain ATCC 35395 / DSM 2834 / JCM 12185 / C2A)).